We begin with the raw amino-acid sequence, 418 residues long: Serine hydroxymethyltransferase (418 aa).

(6S)-5,6,7,8-tetrahydrofolate is bound by residues Leu121 and 125-127; that span reads GHL. N6-(pyridoxal phosphate)lysine is present on Lys230. 355–357 provides a ligand contact to (6S)-5,6,7,8-tetrahydrofolate; it reads SPF.

Belongs to the SHMT family. As to quaternary structure, homodimer. Pyridoxal 5'-phosphate is required as a cofactor.

It localises to the cytoplasm. It catalyses the reaction (6R)-5,10-methylene-5,6,7,8-tetrahydrofolate + glycine + H2O = (6S)-5,6,7,8-tetrahydrofolate + L-serine. It functions in the pathway one-carbon metabolism; tetrahydrofolate interconversion. Its pathway is amino-acid biosynthesis; glycine biosynthesis; glycine from L-serine: step 1/1. Catalyzes the reversible interconversion of serine and glycine with tetrahydrofolate (THF) serving as the one-carbon carrier. This reaction serves as the major source of one-carbon groups required for the biosynthesis of purines, thymidylate, methionine, and other important biomolecules. Also exhibits THF-independent aldolase activity toward beta-hydroxyamino acids, producing glycine and aldehydes, via a retro-aldol mechanism. This chain is Serine hydroxymethyltransferase, found in Streptococcus agalactiae serotype III (strain NEM316).